The following is a 438-amino-acid chain: Methylenetetrahydrofolate--tRNA-(uracil-5-)-methyltransferase TrmFO 2 (438 aa).

Position 9–14 (9–14) interacts with FAD; the sequence is GAGLAG.

Belongs to the MnmG family. TrmFO subfamily. FAD is required as a cofactor.

The protein resides in the cytoplasm. It carries out the reaction uridine(54) in tRNA + (6R)-5,10-methylene-5,6,7,8-tetrahydrofolate + NADH + H(+) = 5-methyluridine(54) in tRNA + (6S)-5,6,7,8-tetrahydrofolate + NAD(+). It catalyses the reaction uridine(54) in tRNA + (6R)-5,10-methylene-5,6,7,8-tetrahydrofolate + NADPH + H(+) = 5-methyluridine(54) in tRNA + (6S)-5,6,7,8-tetrahydrofolate + NADP(+). In terms of biological role, catalyzes the folate-dependent formation of 5-methyl-uridine at position 54 (M-5-U54) in all tRNAs. The chain is Methylenetetrahydrofolate--tRNA-(uracil-5-)-methyltransferase TrmFO 2 from Mycoplasma mycoides subsp. mycoides SC (strain CCUG 32753 / NCTC 10114 / PG1).